The following is a 509-amino-acid chain: tRNA-2-methylthio-N(6)-dimethylallyladenosine synthase (509 aa).

Over residues 1–15 the composition is skewed to polar residues; that stretch reads MNEQQRLASQQANAS. The disordered stretch occupies residues 1–22; that stretch reads MNEQQRLASQQANASTKKEEKD. The MTTase N-terminal domain occupies 66–184; sequence RKFYIRTYGC…LPYILKDAMF (119 aa). 6 residues coordinate [4Fe-4S] cluster: cysteine 75, cysteine 111, cysteine 145, cysteine 221, cysteine 225, and cysteine 228. A Radical SAM core domain is found at 207 to 437; that stretch reads RRGDIKAWVN…NELVNEFSAK (231 aa). Residues 440–503 form the TRAM domain; it reads KKYEGQIVEV…TWSLNGELVE (64 aa).

The protein belongs to the methylthiotransferase family. MiaB subfamily. In terms of assembly, monomer. The cofactor is [4Fe-4S] cluster.

Its subcellular location is the cytoplasm. The catalysed reaction is N(6)-dimethylallyladenosine(37) in tRNA + (sulfur carrier)-SH + AH2 + 2 S-adenosyl-L-methionine = 2-methylsulfanyl-N(6)-dimethylallyladenosine(37) in tRNA + (sulfur carrier)-H + 5'-deoxyadenosine + L-methionine + A + S-adenosyl-L-homocysteine + 2 H(+). Functionally, catalyzes the methylthiolation of N6-(dimethylallyl)adenosine (i(6)A), leading to the formation of 2-methylthio-N6-(dimethylallyl)adenosine (ms(2)i(6)A) at position 37 in tRNAs that read codons beginning with uridine. The sequence is that of tRNA-2-methylthio-N(6)-dimethylallyladenosine synthase from Bacillus cytotoxicus (strain DSM 22905 / CIP 110041 / 391-98 / NVH 391-98).